A 292-amino-acid polypeptide reads, in one-letter code: MTEFDLSTREGRWKHFGSVDPIEGTKPTTKNEMTDLQSTHKDFLFEIEEVGIKNLVYPVLVDQYQTAGTFSFSTSLTKDEKGINMSRIIESVEKHYDNGIELEFNTLYQVLRTLQTNMKQNAAGVDVSGKWFFDRYSPTTNIKAVGNADVTYGLAIDGDKVTRKELTIEATVTTLCPCSKEISEYSAHNQRGVVTVKTYINKDQDIVDDYKNKILDAMEANASSILYPILKRPDEKRVTERAYENPRFVEDLIRLIAADLVEFDWLDGFDIECRNEESIHQHDAFAKLKYRK.

Belongs to the GTP cyclohydrolase IV family.

The catalysed reaction is GTP + H2O = 7,8-dihydroneopterin 3'-triphosphate + formate + H(+). It participates in cofactor biosynthesis; 7,8-dihydroneopterin triphosphate biosynthesis; 7,8-dihydroneopterin triphosphate from GTP: step 1/1. Functionally, converts GTP to 7,8-dihydroneopterin triphosphate. This chain is GTP cyclohydrolase FolE2, found in Staphylococcus aureus (strain Newman).